The primary structure comprises 429 residues: Adenylosuccinate synthetase (429 aa).

GTP is bound by residues 12 to 18 (GDEGKGK) and 40 to 42 (GHT). Aspartate 13 functions as the Proton acceptor in the catalytic mechanism. Mg(2+)-binding residues include aspartate 13 and glycine 40. IMP contacts are provided by residues 13–16 (DEGK), 38–41 (NAGH), threonine 129, arginine 143, glutamine 223, threonine 238, and arginine 302. Histidine 41 acts as the Proton donor in catalysis. 298-304 (TVTGRPR) is a substrate binding site. GTP contacts are provided by residues arginine 304, 330 to 332 (KLD), and 412 to 414 (STS).

It belongs to the adenylosuccinate synthetase family. Homodimer. Mg(2+) is required as a cofactor.

The protein localises to the cytoplasm. The enzyme catalyses IMP + L-aspartate + GTP = N(6)-(1,2-dicarboxyethyl)-AMP + GDP + phosphate + 2 H(+). The protein operates within purine metabolism; AMP biosynthesis via de novo pathway; AMP from IMP: step 1/2. Plays an important role in the de novo pathway of purine nucleotide biosynthesis. Catalyzes the first committed step in the biosynthesis of AMP from IMP. The polypeptide is Adenylosuccinate synthetase (Gluconobacter oxydans (strain 621H) (Gluconobacter suboxydans)).